Reading from the N-terminus, the 372-residue chain is Alanine racemase (372 aa).

K41 functions as the Proton acceptor; specific for D-alanine in the catalytic mechanism. K41 is subject to N6-(pyridoxal phosphate)lysine. Residue R139 coordinates substrate. The Proton acceptor; specific for L-alanine role is filled by Y268. Substrate is bound at residue M316.

The protein belongs to the alanine racemase family. It depends on pyridoxal 5'-phosphate as a cofactor.

It carries out the reaction L-alanine = D-alanine. It functions in the pathway amino-acid biosynthesis; D-alanine biosynthesis; D-alanine from L-alanine: step 1/1. Functionally, catalyzes the interconversion of L-alanine and D-alanine. May also act on other amino acids. The protein is Alanine racemase (alr) of Borreliella burgdorferi (strain ATCC 35210 / DSM 4680 / CIP 102532 / B31) (Borrelia burgdorferi).